A 408-amino-acid polypeptide reads, in one-letter code: MINALKGMKDLLDKDAYYYEKVIKTCEEVAKNYGFTFINTPHLELCTLFKRSVGESSDIVGKEMYEFIDKGENHVCMRPEGTAGVVRAYIEKKLDKNTSVKRWFYHGSMFRYERPQKGRLREFHQFGVESFGNASVYEDASIILMLVEIFSRLDIKFKLLINSLGCLKCMPKYRENLIHFLDSKEGFCEDCLRRKNLNPIRVLDCKNEHCQSLLNDAPLLNQNLCSSCQKDFEILQSVLKENGVDFEVDSKLVRGLDYYSKTAFEFISDEIGAKAAIAGGGRYDRLIEYLDGKSGFGVGFAMGIERIIAILEQKEEKVQREGIYLCAMDEIYIQKLLHIATNLRKEHKVLLSYEARKLAKHLENADKNNAEIFLCMGENEAQNESLFYKNLVKKEEKMIKISDLKKVL.

This sequence belongs to the class-II aminoacyl-tRNA synthetase family. As to quaternary structure, homodimer.

It is found in the cytoplasm. It catalyses the reaction tRNA(His) + L-histidine + ATP = L-histidyl-tRNA(His) + AMP + diphosphate + H(+). The protein is Histidine--tRNA ligase of Campylobacter jejuni subsp. jejuni serotype O:6 (strain 81116 / NCTC 11828).